Consider the following 421-residue polypeptide: Cyclin-A1 (421 aa).

The tract at residues 1 to 20 is disordered; it reads MRRHSSKSGVALPPVGQGPD.

The protein belongs to the cyclin family. Cyclin AB subfamily. As to quaternary structure, interacts with the CDK2 and the CDC2 protein kinases to form a serine/threonine kinase holoenzyme complex. The cyclin subunit imparts substrate specificity to the complex. Does not bind CDK4 and CDK5 (in vitro). The cyclin A1-CDK2 complex interacts with transcription factor E2F-1 and RB proteins. Found in a complex with CDK2, CABLES1 and CCNE1. Interacts with INCA1 and KLHDC9. Post-translationally, polyubiquitinated via 'Lys-11'-linked ubiquitin by the anaphase-promoting complex (APC/C), leading to its degradation by the proteasome. Deubiquitinated and stabilized by USP37 enables entry into S phase. Ubiquitinated during the G1 phase by the SCF(FBXO31) complex, leading to its proteasomal degradation.

It localises to the nucleus. In terms of biological role, may be involved in the control of the cell cycle at the G1/S (start) and G2/M (mitosis) transitions. May primarily function in the control of the germline meiotic cell cycle and additionally in the control of mitotic cell cycle in some somatic cells. The protein is Cyclin-A1 (Ccna1) of Rattus norvegicus (Rat).